Here is a 90-residue protein sequence, read N- to C-terminus: MKLSVCLLLVTLALCCYQANAEFCPALVSELLDFFFISEPLFKLSLAKFDAPPEAVAAKLGVKRCTDQMSLQKRSLIAEVLVKILKKCSV.

The first 21 residues, 1-21, serve as a signal peptide directing secretion; the sequence is MKLSVCLLLVTLALCCYQANA.

The protein belongs to the secretoglobin family. Lipophilin subfamily. As to expression, highest expression was found in skeletal muscle. Expressed as well in thymus, trachea, kidney, steroid responsive tissues (prostate, testis, uterus, breast and ovary) and salivary gland.

It localises to the secreted. Its function is as follows. May bind androgens and other steroids, may also bind estramustine, a chemotherapeutic agent used for prostate cancer. May be under transcriptional regulation of steroid hormones. The chain is Secretoglobin family 1D member 2 (SCGB1D2) from Homo sapiens (Human).